Consider the following 712-residue polypeptide: Elongation factor G (712 aa).

Residues 8-290 (TRYRNIGISA…AVIEFLPSPT (283 aa)) enclose the tr-type G domain. Residues 17-24 (AHIDAGKT), 88-92 (DTPGH), and 142-145 (NKMD) contribute to the GTP site.

It belongs to the TRAFAC class translation factor GTPase superfamily. Classic translation factor GTPase family. EF-G/EF-2 subfamily.

It is found in the cytoplasm. In terms of biological role, catalyzes the GTP-dependent ribosomal translocation step during translation elongation. During this step, the ribosome changes from the pre-translocational (PRE) to the post-translocational (POST) state as the newly formed A-site-bound peptidyl-tRNA and P-site-bound deacylated tRNA move to the P and E sites, respectively. Catalyzes the coordinated movement of the two tRNA molecules, the mRNA and conformational changes in the ribosome. This chain is Elongation factor G, found in Acinetobacter baumannii (strain AB307-0294).